Here is a 103-residue protein sequence, read N- to C-terminus: ATP synthase F(0) complex subunit g, mitochondrial (103 aa).

Alanine 2 carries the N-acetylalanine modification. An N6-acetyllysine mark is found at lysine 11, lysine 24, lysine 35, and lysine 54.

Belongs to the ATPase g subunit family. In terms of assembly, component of the ATP synthase complex composed at least of ATP5F1A/subunit alpha, ATP5F1B/subunit beta, ATP5MC1/subunit c (homooctomer), MT-ATP6/subunit a, MT-ATP8/subunit 8, ATP5ME/subunit e, ATP5MF/subunit f, ATP5MG/subunit g, ATP5MK/subunit k, ATP5MJ/subunit j, ATP5F1C/subunit gamma, ATP5F1D/subunit delta, ATP5F1E/subunit epsilon, ATP5PF/subunit F6, ATP5PB/subunit b, ATP5PD/subunit d, ATP5PO/subunit OSCP. ATP synthase complex consists of a soluble F(1) head domain (subunits alpha(3) and beta(3)) - the catalytic core - and a membrane F(0) domain - the membrane proton channel (subunits c, a, 8, e, f, g, k and j). These two domains are linked by a central stalk (subunits gamma, delta, and epsilon) rotating inside the F1 region and a stationary peripheral stalk (subunits F6, b, d, and OSCP).

The protein resides in the mitochondrion. Its subcellular location is the mitochondrion inner membrane. Functionally, subunit g, of the mitochondrial membrane ATP synthase complex (F(1)F(0) ATP synthase or Complex V) that produces ATP from ADP in the presence of a proton gradient across the membrane which is generated by electron transport complexes of the respiratory chain. ATP synthase complex consist of a soluble F(1) head domain - the catalytic core - and a membrane F(1) domain - the membrane proton channel. These two domains are linked by a central stalk rotating inside the F(1) region and a stationary peripheral stalk. During catalysis, ATP synthesis in the catalytic domain of F(1) is coupled via a rotary mechanism of the central stalk subunits to proton translocation. In vivo, can only synthesize ATP although its ATP hydrolase activity can be activated artificially in vitro. Part of the complex F(0) domain. This is ATP synthase F(0) complex subunit g, mitochondrial from Homo sapiens (Human).